Here is a 202-residue protein sequence, read N- to C-terminus: Histone H1 (202 aa).

Disordered regions lie at residues 1–50 (MTAI…VTHP) and 114–202 (YKLS…KIAV). The span at 18 to 38 (EASKVKEQAPATDKKPRAPKE) shows a compositional bias: basic and acidic residues. An H15 domain is found at 48–118 (THPPYFQMIK…KIKASYKLSE (71 aa)). Basic residues predominate over residues 160–202 (KAKATPKPKKVGAKRTRKSTPAKAKQPKSIKSPAAKRAKKIAV).

It belongs to the histone H1/H5 family.

The protein resides in the nucleus. It is found in the chromosome. Functionally, histones H1 are necessary for the condensation of nucleosome chains into higher-order structures. This is Histone H1 from Solanum pennellii (Tomato).